The chain runs to 398 residues: Probable pectate lyase P56 (398 aa).

The N-terminal stretch at 1-27 is a signal peptide; that stretch reads MEYSYRTKINVLFIVLILFVFAALGTA. N135 carries N-linked (GlcNAc...) asparagine glycosylation. Residues D192, D217, and D221 each contribute to the Ca(2+) site. N-linked (GlcNAc...) asparagine glycosylation occurs at N228. R273 is a catalytic residue.

This sequence belongs to the polysaccharide lyase 1 family. Requires Ca(2+) as cofactor. Expressed in anthers and pollen.

The catalysed reaction is Eliminative cleavage of (1-&gt;4)-alpha-D-galacturonan to give oligosaccharides with 4-deoxy-alpha-D-galact-4-enuronosyl groups at their non-reducing ends.. The protein operates within glycan metabolism; pectin degradation; 2-dehydro-3-deoxy-D-gluconate from pectin: step 2/5. Might be needed during pollen development and tube growth. The sequence is that of Probable pectate lyase P56 (LAT56) from Solanum lycopersicum (Tomato).